The following is a 189-amino-acid chain: Putative OVARIAN TUMOR DOMAIN-containing deubiquitinating enzyme 8 (189 aa).

The OTU domain maps to 1 to 103 (MMKSDGNCQF…GIHFNSIYKK (103 aa)). Aspartate 5 is a catalytic residue. The Nucleophile role is filled by cysteine 8. The active site involves histidine 96. Residues 105–189 (KEKGSRSSSS…NRNHHFHYSE (85 aa)) are disordered. A coiled-coil region spans residues 120 to 181 (WMKLQRKKEN…KKEKKEKKNR (62 aa)). 2 short sequence motifs (nuclear localization signal) span residues 125–132 (RKKENEAK) and 163–170 (KKKAKVQK). Residues 126–174 (KKENEAKKKEEEEKERKDMEKEEKKKDKEDKKKDKEDKKKAKVQKEKKE) are compositionally biased toward basic and acidic residues. Residues 175–189 (KKEKKNRNHHFHYSE) show a composition bias toward basic residues.

The protein belongs to the peptidase C85 family.

The protein resides in the nucleus. It catalyses the reaction Thiol-dependent hydrolysis of ester, thioester, amide, peptide and isopeptide bonds formed by the C-terminal Gly of ubiquitin (a 76-residue protein attached to proteins as an intracellular targeting signal).. Hydrolase that can remove conjugated ubiquitin from proteins in vitro and may therefore play an important regulatory role at the level of protein turnover by preventing degradation. The protein is Putative OVARIAN TUMOR DOMAIN-containing deubiquitinating enzyme 8 of Arabidopsis thaliana (Mouse-ear cress).